Reading from the N-terminus, the 488-residue chain is Cobyric acid synthase (488 aa).

Positions 248-441 (VLRVVVPALP…VHGLFDTPAA (194 aa)) constitute a GATase cobBQ-type domain. Cys-328 (nucleophile) is an active-site residue. Residue His-433 is part of the active site.

The protein belongs to the CobB/CobQ family. CobQ subfamily.

It participates in cofactor biosynthesis; adenosylcobalamin biosynthesis. Functionally, catalyzes amidations at positions B, D, E, and G on adenosylcobyrinic A,C-diamide. NH(2) groups are provided by glutamine, and one molecule of ATP is hydrogenolyzed for each amidation. This is Cobyric acid synthase from Burkholderia vietnamiensis (strain G4 / LMG 22486) (Burkholderia cepacia (strain R1808)).